A 134-amino-acid chain; its full sequence is Small ribosomal subunit protein uS8 (134 aa).

The protein belongs to the universal ribosomal protein uS8 family. Part of the 30S ribosomal subunit. Contacts proteins S5 and S12.

Its function is as follows. One of the primary rRNA binding proteins, it binds directly to 16S rRNA central domain where it helps coordinate assembly of the platform of the 30S subunit. The protein is Small ribosomal subunit protein uS8 of Thermosipho africanus (strain TCF52B).